The following is a 415-amino-acid chain: Histidine--tRNA ligase (415 aa).

The protein belongs to the class-II aminoacyl-tRNA synthetase family. In terms of assembly, homodimer.

It localises to the cytoplasm. It carries out the reaction tRNA(His) + L-histidine + ATP = L-histidyl-tRNA(His) + AMP + diphosphate + H(+). This is Histidine--tRNA ligase from Rickettsia canadensis (strain McKiel).